The sequence spans 525 residues: ESX-1 secretion-associated protein EspE (525 aa).

2 disordered regions span residues 244 to 341 (AVAG…PGAA) and 375 to 494 (ALQA…APVH). Acidic residues predominate over residues 248 to 258 (DADDTTADDTA). The span at 274 to 286 (ETSKEDGQSRHEN) shows a compositional bias: basic and acidic residues. Positions 292-306 (SGGGGGATSGGGGGA) are enriched in gly residues. 3 stretches are compositionally biased toward low complexity: residues 307 to 319 (PSSA…AGTP), 332 to 341 (TPTDAQPGAA), and 375 to 397 (ALQA…AAAP). The segment covering 411 to 440 (DPDAEGDKDSDKRDGEGKEDGTAPRDREST) has biased composition (basic and acidic residues).

It is found in the cytoplasm. The polypeptide is ESX-1 secretion-associated protein EspE (Mycolicibacterium smegmatis (strain ATCC 700084 / mc(2)155) (Mycobacterium smegmatis)).